The sequence spans 342 residues: 3-isopropylmalate dehydrogenase (342 aa).

R92, R102, R126, and D216 together coordinate substrate. Positions 216, 240, and 244 each coordinate Mg(2+). 276-288 (GSAPDIAGKGIAD) contacts NAD(+).

It belongs to the isocitrate and isopropylmalate dehydrogenases family. LeuB type 2 subfamily. In terms of assembly, homodimer. Mg(2+) is required as a cofactor. The cofactor is Mn(2+).

It localises to the cytoplasm. The enzyme catalyses (2R,3S)-3-isopropylmalate + NAD(+) = 4-methyl-2-oxopentanoate + CO2 + NADH. The protein operates within amino-acid biosynthesis; L-leucine biosynthesis; L-leucine from 3-methyl-2-oxobutanoate: step 3/4. Functionally, catalyzes the oxidation of 3-carboxy-2-hydroxy-4-methylpentanoate (3-isopropylmalate) to 3-carboxy-4-methyl-2-oxopentanoate. The product decarboxylates to 4-methyl-2 oxopentanoate. This Corynebacterium kroppenstedtii (strain DSM 44385 / JCM 11950 / CIP 105744 / CCUG 35717) protein is 3-isopropylmalate dehydrogenase.